Consider the following 175-residue polypeptide: Large ribosomal subunit protein uL18 (175 aa).

The protein belongs to the universal ribosomal protein uL18 family. As to quaternary structure, part of the 50S ribosomal subunit. Contacts the 5S and 23S rRNAs.

In terms of biological role, this is one of the proteins that bind and probably mediate the attachment of the 5S RNA into the large ribosomal subunit, where it forms part of the central protuberance. This is Large ribosomal subunit protein uL18 from Methanoculleus marisnigri (strain ATCC 35101 / DSM 1498 / JR1).